The chain runs to 187 residues: Elongation factor P (187 aa).

This sequence belongs to the elongation factor P family.

Its subcellular location is the cytoplasm. Its pathway is protein biosynthesis; polypeptide chain elongation. In terms of biological role, involved in peptide bond synthesis. Stimulates efficient translation and peptide-bond synthesis on native or reconstituted 70S ribosomes in vitro. Probably functions indirectly by altering the affinity of the ribosome for aminoacyl-tRNA, thus increasing their reactivity as acceptors for peptidyl transferase. The protein is Elongation factor P of Nocardioides sp. (strain ATCC BAA-499 / JS614).